The primary structure comprises 213 residues: Thiopurine S-methyltransferase (213 aa).

Positions 10, 45, 66, and 121 each coordinate S-adenosyl-L-methionine.

This sequence belongs to the class I-like SAM-binding methyltransferase superfamily. TPMT family.

Its subcellular location is the cytoplasm. The catalysed reaction is S-adenosyl-L-methionine + a thiopurine = S-adenosyl-L-homocysteine + a thiopurine S-methylether.. This chain is Thiopurine S-methyltransferase, found in Aliivibrio salmonicida (strain LFI1238) (Vibrio salmonicida (strain LFI1238)).